We begin with the raw amino-acid sequence, 191 residues long: Protein NUCLEAR FUSION DEFECTIVE 2 (191 aa).

The N-terminal stretch at methionine 1–alanine 29 is a signal peptide. In terms of domain architecture, RNase III spans leucine 48–glycine 167.

In terms of biological role, required for karyogamy during female gametophyte development, when the two polar nuclei fuse to form the diploid central cell nucleus. This is Protein NUCLEAR FUSION DEFECTIVE 2 from Arabidopsis thaliana (Mouse-ear cress).